Consider the following 168-residue polypeptide: Photosystem I assembly protein Ycf3 (168 aa).

TPR repeat units follow at residues 35 to 68 (AFTY…EIDP), 72 to 105 (SYIL…NPFL), and 120 to 153 (GEQA…TPGN).

Belongs to the Ycf3 family.

It is found in the plastid. The protein resides in the chloroplast thylakoid membrane. In terms of biological role, essential for the assembly of the photosystem I (PSI) complex. May act as a chaperone-like factor to guide the assembly of the PSI subunits. The protein is Photosystem I assembly protein Ycf3 of Oenothera elata subsp. hookeri (Hooker's evening primrose).